A 38-amino-acid polypeptide reads, in one-letter code: Large ribosomal subunit protein bL36c (38 aa).

This sequence belongs to the bacterial ribosomal protein bL36 family.

The protein localises to the plastid. Its subcellular location is the apicoplast. This chain is Large ribosomal subunit protein bL36c (rpl36), found in Theileria parva (East coast fever infection agent).